Here is a 74-residue protein sequence, read N- to C-terminus: Histone H1.C8/H1.M1 (74 aa).

Residues 1 to 74 form a disordered region; sequence MSDAAVPPKK…KAVKKAPKKK (74 aa). Basic residues predominate over residues 11-74; the sequence is ASPKKAAAKK…KAVKKAPKKK (64 aa).

The protein resides in the nucleus. It localises to the chromosome. The protein is Histone H1.C8/H1.M1 of Trypanosoma cruzi.